We begin with the raw amino-acid sequence, 86 residues long: Arminin 7246 (86 aa).

The N-terminal stretch at 1 to 18 (MRPEYAVLFLALIALTYA) is a signal peptide. The propeptide occupies 19 to 57 (RSNEDVREEIKNEIEKDILEDLVEDEGELDDKAIDVNDA). Ala-83 is subject to Alanine amide.

It belongs to the arminin family. In terms of tissue distribution, expressed in entodermal epithelium along the body column.

The protein resides in the secreted. Its subcellular location is the target cell membrane. Its function is as follows. Antimicrobial peptide with a broad-spectrum antimicrobial activity. Keeps its antibacterial activity under a wide range of salt concentrations that mimic physiological conditions of human blood, which is surprising, since Hydra is an obligate freshwater animal with nearly no salt tolerance. Does not affect red blood cells. The protein is Arminin 7246 of Hydra viridissima (Green hydra).